A 252-amino-acid polypeptide reads, in one-letter code: 2-succinyl-6-hydroxy-2,4-cyclohexadiene-1-carboxylate synthase (252 aa).

Belongs to the AB hydrolase superfamily. MenH family. As to quaternary structure, monomer.

It carries out the reaction 5-enolpyruvoyl-6-hydroxy-2-succinyl-cyclohex-3-ene-1-carboxylate = (1R,6R)-6-hydroxy-2-succinyl-cyclohexa-2,4-diene-1-carboxylate + pyruvate. It participates in quinol/quinone metabolism; 1,4-dihydroxy-2-naphthoate biosynthesis; 1,4-dihydroxy-2-naphthoate from chorismate: step 3/7. It functions in the pathway quinol/quinone metabolism; menaquinone biosynthesis. Catalyzes a proton abstraction reaction that results in 2,5-elimination of pyruvate from 2-succinyl-5-enolpyruvyl-6-hydroxy-3-cyclohexene-1-carboxylate (SEPHCHC) and the formation of 2-succinyl-6-hydroxy-2,4-cyclohexadiene-1-carboxylate (SHCHC). The protein is 2-succinyl-6-hydroxy-2,4-cyclohexadiene-1-carboxylate synthase of Escherichia coli O7:K1 (strain IAI39 / ExPEC).